The following is a 602-amino-acid chain: Aspartate--tRNA(Asp/Asn) ligase (602 aa).

An L-aspartate-binding site is contributed by E187. The segment at Q211–K214 is aspartate. Residues R233 and H461 each coordinate L-aspartate. R233–E235 is a binding site for ATP. An ATP-binding site is contributed by E495. R502 lines the L-aspartate pocket. G547 to R550 is a binding site for ATP.

Belongs to the class-II aminoacyl-tRNA synthetase family. Type 1 subfamily. In terms of assembly, homodimer.

It is found in the cytoplasm. It carries out the reaction tRNA(Asx) + L-aspartate + ATP = L-aspartyl-tRNA(Asx) + AMP + diphosphate. Its function is as follows. Aspartyl-tRNA synthetase with relaxed tRNA specificity since it is able to aspartylate not only its cognate tRNA(Asp) but also tRNA(Asn). Reaction proceeds in two steps: L-aspartate is first activated by ATP to form Asp-AMP and then transferred to the acceptor end of tRNA(Asp/Asn). The protein is Aspartate--tRNA(Asp/Asn) ligase of Chlorobium phaeovibrioides (strain DSM 265 / 1930) (Prosthecochloris vibrioformis (strain DSM 265)).